The sequence spans 276 residues: NH(3)-dependent NAD(+) synthetase (276 aa).

43–50 (GISGGVDS) contributes to the ATP binding site. Residue Asp-49 participates in Mg(2+) binding. Deamido-NAD(+) is bound at residue Arg-146. Thr-166 contributes to the ATP binding site. Mg(2+) is bound at residue Glu-171. Positions 179 and 186 each coordinate deamido-NAD(+). Residues Lys-195 and Thr-217 each coordinate ATP. 266 to 267 (HK) serves as a coordination point for deamido-NAD(+).

Belongs to the NAD synthetase family. As to quaternary structure, homodimer.

It carries out the reaction deamido-NAD(+) + NH4(+) + ATP = AMP + diphosphate + NAD(+) + H(+). Its pathway is cofactor biosynthesis; NAD(+) biosynthesis; NAD(+) from deamido-NAD(+) (ammonia route): step 1/1. In terms of biological role, catalyzes the ATP-dependent amidation of deamido-NAD to form NAD. Uses ammonia as a nitrogen source. The sequence is that of NH(3)-dependent NAD(+) synthetase from Shewanella halifaxensis (strain HAW-EB4).